The chain runs to 205 residues: Phosphoenolpyruvate guanylyltransferase (205 aa).

Positions 138, 154, and 157 each coordinate phosphoenolpyruvate.

Belongs to the CofC family.

It catalyses the reaction phosphoenolpyruvate + GTP + H(+) = enolpyruvoyl-2-diphospho-5'-guanosine + diphosphate. Its pathway is cofactor biosynthesis; coenzyme F420 biosynthesis. In terms of biological role, guanylyltransferase that catalyzes the activation of phosphoenolpyruvate (PEP) as enolpyruvoyl-2-diphospho-5'-guanosine, via the condensation of PEP with GTP. It is involved in the biosynthesis of coenzyme F420, a hydride carrier cofactor. This is Phosphoenolpyruvate guanylyltransferase from Chloroflexus aurantiacus (strain ATCC 29364 / DSM 637 / Y-400-fl).